The primary structure comprises 543 residues: Carboxypeptidase Y homolog A (543 aa).

Residues 1–17 (MRVLPATLLVGAATAAV) form the signal peptide. Positions 18-124 (PPFQQILGLP…KLEAYDLRVK (107 aa)) are excised as a propeptide. 5 disulfides stabilise this stretch: cysteine 179/cysteine 419, cysteine 313/cysteine 327, cysteine 337/cysteine 360, cysteine 344/cysteine 353, and cysteine 382/cysteine 389. N-linked (GlcNAc...) asparagine glycosylation occurs at asparagine 210. Residue serine 266 is part of the active site. The active site involves aspartate 458. An N-linked (GlcNAc...) asparagine glycan is attached at asparagine 509. The active site involves histidine 520.

The protein belongs to the peptidase S10 family.

It is found in the vacuole. The enzyme catalyses Release of a C-terminal amino acid with broad specificity.. Vacuolar carboxypeptidase involved in degradation of small peptides. Digests preferentially peptides containing an aliphatic or hydrophobic residue in P1' position, as well as methionine, leucine or phenylalanine in P1 position of ester substrate. The polypeptide is Carboxypeptidase Y homolog A (cpyA) (Aspergillus clavatus (strain ATCC 1007 / CBS 513.65 / DSM 816 / NCTC 3887 / NRRL 1 / QM 1276 / 107)).